Consider the following 185-residue polypeptide: Ribosome-recycling factor (185 aa).

Belongs to the RRF family.

It is found in the cytoplasm. In terms of biological role, responsible for the release of ribosomes from messenger RNA at the termination of protein biosynthesis. May increase the efficiency of translation by recycling ribosomes from one round of translation to another. This Hydrogenovibrio crunogenus (strain DSM 25203 / XCL-2) (Thiomicrospira crunogena) protein is Ribosome-recycling factor.